Consider the following 261-residue polypeptide: MAVQAVHIQGDAFLVCVTHSLSTEREEVMGLCIGEVDTQKLVHIHSVIILRRSDKRKDRVEISPEQLSAATIEADRLADITGRPMRVVGWYHSHPHITVWPSHVDVRTQAMYQMMDVGFVGLIFSCFIEDKNTKTGRILYTCFQSVQAQKSSEYERIEVPLHVVPHNTIRKVCLESAVELPRILCQEEQDAYRRIHSLGHLDSITKIHNGSVFTKNLCGQMSAISGPLLQWLEDRLEQNRQRAQELQSEKEQLLQELKTLG.

Residues 6-149 (VHIQGDAFLV…YTCFQSVQAQ (144 aa)) form the MPN domain. Zn(2+)-binding residues include H92, H94, and D105. Positions 92–105 (HSHPHITVWPSHVD) match the JAMM motif motif.

It belongs to the peptidase M67A family. BRCC36 subfamily. Component of the BRCA1-A complex, at least composed of brca1, bard1, uimc1/rap80, abraxas1, brcc3/brcc36, babam2 and babam1/nba1. In the BRCA1-A complex, interacts directly with ABRAXAS1 and babam2. Component of the BRISC complex, at least composed of ABRAXAS2, brcc3/brcc36, babam2 and babam1/nba1. Within the complex, interacts directly with abraxas2. Both the BRCA1-A complex and the BRISC complex bind polyubiquitin. It depends on Zn(2+) as a cofactor.

The protein resides in the nucleus. Its subcellular location is the cytoplasm. The protein localises to the cytoskeleton. It is found in the spindle pole. Metalloprotease that specifically cleaves 'Lys-63'-linked polyubiquitin chains. Does not have activity toward 'Lys-48'-linked polyubiquitin chains. Component of the BRCA1-A complex, a complex that specifically recognizes 'Lys-63'-linked ubiquitinated histones H2A and H2AX at DNA lesions sites, leading to target the brca1-bard1 heterodimer to sites of DNA damage at double-strand breaks (DSBs). In the BRCA1-A complex, it specifically removes 'Lys-63'-linked ubiquitin on histones H2A and H2AX, antagonizing the rnf8-dependent ubiquitination at double-strand breaks (DSBs). Catalytic subunit of the BRISC complex, a multiprotein complex that specifically cleaves 'Lys-63'-linked ubiquitin in various substrates. Mediates the specific 'Lys-63'-specific deubiquitination associated with the COP9 signalosome complex (CSN), via the interaction of the BRISC complex with the CSN complex. The BRISC complex is required for normal mitotic spindle assembly and microtubule attachment to kinetochores via its role in deubiquitinating numa1. Plays a role in interferon signaling via its role in the deubiquitination of the interferon receptor ifnar1; deubiquitination increases ifnar1 activity by enhancing its stability and cell surface expression. Acts as a regulator of the NLRP3 inflammasome by mediating deubiquitination of nlrp3. Down-regulates the response to bacterial lipopolysaccharide (LPS) via its role in ifnar1 deubiquitination. In Xenopus laevis (African clawed frog), this protein is Lys-63-specific deubiquitinase BRCC36 (brcc3).